A 127-amino-acid chain; its full sequence is MFPHLVGLGINEPTQIERYSLRQEAHKDVLKIYFKKQKGELFAKSVKFKYPRQIKNVLVDSGSHQYKEVTEINRNLTLVIDELNKITKPEVMGEVDVKQKILNDLRHLEKVVASKIAEIEADLQKLN.

This sequence belongs to the UPF0325 family.

In Vibrio cholerae serotype O1 (strain ATCC 39315 / El Tor Inaba N16961), this protein is UPF0325 protein VC_2264.